Reading from the N-terminus, the 260-residue chain is Glutamate racemase (260 aa).

Residues D14–S15 and Y46–G47 each bind substrate. The active-site Proton donor/acceptor is the C77. Residue N78–T79 participates in substrate binding. C188 (proton donor/acceptor) is an active-site residue. Substrate is bound at residue T189–H190.

It belongs to the aspartate/glutamate racemases family.

It carries out the reaction L-glutamate = D-glutamate. The protein operates within cell wall biogenesis; peptidoglycan biosynthesis. In terms of biological role, provides the (R)-glutamate required for cell wall biosynthesis. This Clostridium perfringens (strain 13 / Type A) protein is Glutamate racemase.